The chain runs to 206 residues: uncharacterized protein (206 aa).

Residues 29-169 (YWHSTFHCWV…DGVFAEGFIV (141 aa)) form the Nudix hydrolase domain. The short motif at 69–90 (AGHIKSGESIEDGVRELKEELG) is the Nudix box element. Mg(2+) contacts are provided by Glu84 and Glu88.

It belongs to the Nudix hydrolase family. The cofactor is Mg(2+).

This is an uncharacterized protein from Clostridium acetobutylicum (strain ATCC 824 / DSM 792 / JCM 1419 / IAM 19013 / LMG 5710 / NBRC 13948 / NRRL B-527 / VKM B-1787 / 2291 / W).